The sequence spans 246 residues: Probable transcriptional regulatory protein BVU_3469 (246 aa).

Belongs to the TACO1 family.

The protein resides in the cytoplasm. The protein is Probable transcriptional regulatory protein BVU_3469 of Phocaeicola vulgatus (strain ATCC 8482 / DSM 1447 / JCM 5826 / CCUG 4940 / NBRC 14291 / NCTC 11154) (Bacteroides vulgatus).